We begin with the raw amino-acid sequence, 147 residues long: Angiogenin (147 aa).

An N-terminal signal peptide occupies residues Met1–Ala24. Gln25 bears the Pyrrolidone carboxylic acid mark. His37 (proton acceptor) is an active-site residue. Residues Arg45 and Asp46 each coordinate tRNA. 3 disulfide bridges follow: Cys50-Cys105, Cys63-Cys116, and Cys81-Cys131. The short motif at Arg55–Leu59 is the Nucleolar localization signal element. 2 residues coordinate tRNA: Cys105 and Val127. His138 serves as the catalytic Proton donor.

The protein belongs to the pancreatic ribonuclease family. As to quaternary structure, homodimer. Interacts with RNH1; inhibiting ANG ribonuclease activity. Interacts with PCNA.

The protein localises to the secreted. It is found in the nucleus. Its subcellular location is the nucleolus. The protein resides in the cytoplasm. It localises to the stress granule. Has weak tRNA ribonuclease activity by itself due to partial autoinhibition by its C-terminus, which folds into a short alpha-helix that partially occludes the substrate-binding site. In absence of stress, the ribonuclease activity is inhibited by RNH1 in the cytoplasm. In response to stress, dissociates from RNH1 in the cytoplasm and associates with cytoplasmic ribosomes with vacant A-sites: ribosomes directly activate the tRNA ribonuclease activity of ANG by refolding the C-terminal alpha-helix. In response to stress, the angiogenic activity of ANG is inhibited by RNH1 in the nucleus. Secreted ribonuclease that can either promote or restrict cell proliferation of target cells, depending on the context. Endocytosed in target cells via its receptor PLXNB2 and translocates to the cytoplasm or nucleus. Under stress conditions, localizes to the cytoplasm and promotes the assembly of stress granules (SGs): specifically cleaves a subset of tRNAs within anticodon loops to produce tRNA-derived stress-induced fragments (tiRNAs), resulting in translation repression and inhibition of cell proliferation. tiRNas also prevent formation of apoptosome, thereby promoting cell survival. Preferentially cleaves RNAs between a pyrimidine and an adenosine residue, suggesting that it cleaves the anticodon loop of tRNA(Ala) (32-UUAGCAU-38) after positions 33 and 36. Cleaves a subset of tRNAs, including tRNA(Ala), tRNA(Glu), tRNA(Gly), tRNA(Lys), tRNA(Val), tRNA(His), tRNA(Asp) and tRNA(Sec). Under growth conditions and in differentiated cells, translocates to the nucleus and stimulates ribosomal RNA (rRNA) transcription, including that containing the initiation site sequences of 45S rRNA, thereby promoting cell growth and proliferation. Angiogenin induces vascularization of normal and malignant tissues via its ability to promote rRNA transcription. Involved in hematopoietic stem and progenitor cell (HSPC) growth and survival by promoting rRNA transcription in growth conditions and inhibiting translation in response to stress, respectively. Mediates the crosstalk between myeloid and intestinal epithelial cells to protect the intestinal epithelial barrier integrity: secreted by myeloid cells and promotes intestinal epithelial cells proliferation and survival. Also mediates osteoclast-endothelial cell crosstalk in growing bone: produced by osteoclasts and protects the neighboring vascular cells against senescence by promoting rRNA transcription. The polypeptide is Angiogenin (ANG) (Gorilla gorilla gorilla (Western lowland gorilla)).